We begin with the raw amino-acid sequence, 137 residues long: Gonadotropin subunit beta-2 (137 aa).

Residues 1–24 form the signal peptide; the sequence is MLPFMLSSFLGASPSIWPLAPAEA. 6 disulfide bridges follow: cysteine 30–cysteine 76, cysteine 44–cysteine 91, cysteine 47–cysteine 129, cysteine 55–cysteine 107, cysteine 59–cysteine 109, and cysteine 112–cysteine 119. N-linked (GlcNAc...) asparagine glycosylation is present at asparagine 34.

Belongs to the glycoprotein hormones subunit beta family. In terms of assembly, heterodimer of an alpha and a beta chain.

The protein localises to the secreted. Involved in gametogenesis and steroidogenesis. The polypeptide is Gonadotropin subunit beta-2 (cgbb) (Acanthopagrus latus (Yellowfin seabream)).